We begin with the raw amino-acid sequence, 594 residues long: 3-hydroxy-3-methylglutaryl coenzyme A reductase 2-A (594 aa).

Positions 1–32 are disordered; the sequence is MDVRRRPVKSLSSAKTATAGEPPKSQQQHPKA. Topologically, residues 1–37 are lumenal; sequence MDVRRRPVKSLSSAKTATAGEPPKSQQQHPKASDALP. The chain crosses the membrane as a helical span at residues 38–58; that stretch reads LPLYLTNGLFFTMFFSVMYFL. Residues 59 to 81 lie on the Cytoplasmic side of the membrane; sequence LHRWREKIRNSTPLHVVTLSELA. The chain crosses the membrane as a helical span at residues 82-102; the sequence is ALVLLMASVIYLLGFFGIGFV. The Lumenal portion of the chain corresponds to 103 to 549; sequence RSVIRPSPDA…SKESPGSNSR (447 aa). N-linked (GlcNAc...) asparagine glycosylation is present at Asn-261. Glu-273 functions as the Charge relay system in the catalytic mechanism. Asn-337 carries N-linked (GlcNAc...) asparagine glycosylation. Residues Lys-405 and Asp-481 each act as charge relay system in the active site. The helical transmembrane segment at 550-570 threads the bilayer; that stretch reads LLASIVAGSVLAGELSLMSAL. Residues 571–594 are Cytoplasmic-facing; sequence AAGQLVKSHMKYNRSSKDITKLSS. His-579 functions as the Proton donor in the catalytic mechanism.

The protein belongs to the HMG-CoA reductase family. As to expression, mostly expressed in the petioles of seedlings, seedlings and roots, and, to a lower extent, in seeds, leaves, stems and flowers.

It is found in the endoplasmic reticulum membrane. It localises to the plastid. The protein resides in the chloroplast membrane. Its subcellular location is the peroxisome membrane. It carries out the reaction (R)-mevalonate + 2 NADP(+) + CoA = (3S)-3-hydroxy-3-methylglutaryl-CoA + 2 NADPH + 2 H(+). It functions in the pathway metabolic intermediate biosynthesis; (R)-mevalonate biosynthesis; (R)-mevalonate from acetyl-CoA: step 3/3. Its activity is regulated as follows. Competitive inhibition by mevinolin (Mev) is leading to a significant reduction of total ginsenoside in adventitious roots. Triggered by darkness. Catalyzes the synthesis of mevalonate, the specific precursor of all isoprenoid compounds present in plants. Component of the triterpene saponins (e.g. ginsenosides or panaxosides) and phytosterols biosynthetic pathways. The chain is 3-hydroxy-3-methylglutaryl coenzyme A reductase 2-A from Panax ginseng (Korean ginseng).